The following is a 134-amino-acid chain: Ethylmalonyl-CoA/methylmalonyl-CoA epimerase (134 aa).

The region spanning 4-134 is the VOC domain; the sequence is RLNHVAIAVP…NGCLVELEQV (131 aa). Residues histidine 7, histidine 79, and glutamate 130 each contribute to the Co(2+) site. The active-site Proton donor/acceptor is glutamate 130.

Belongs to the methylmalonyl-CoA epimerase family. It depends on Co(2+) as a cofactor. Requires Mn(2+) as cofactor.

The catalysed reaction is (2R)-ethylmalonyl-CoA = (2S)-ethylmalonyl-CoA. It carries out the reaction (R)-methylmalonyl-CoA = (S)-methylmalonyl-CoA. In terms of biological role, promiscuous isomerase that catalyzes epimerization of both ethylmalonyl-CoA and methylmalonyl-CoA. Has thus a dual role in the ethylmalonyl-CoA pathway for acetyl-CoA assimilation required for R.sphaeroides growth on acetate as sole carbon source. This is Ethylmalonyl-CoA/methylmalonyl-CoA epimerase from Cereibacter sphaeroides (strain ATCC 17023 / DSM 158 / JCM 6121 / CCUG 31486 / LMG 2827 / NBRC 12203 / NCIMB 8253 / ATH 2.4.1.) (Rhodobacter sphaeroides).